Here is a 172-residue protein sequence, read N- to C-terminus: MAKMQTKMQNEERDDGLREKMIAVNRVTKVVKGGRILGFAALTVVGDGDGRIGMGKGKSKEVPVAVQKAMDEARRKMIKVTLRKGTLQHTVTGQHGASRVLISPAKDGTGIIAGGPMRAIFDVMGVTNVVAKSLGSTNPYNLVRATIDGLSKMSTPAEIAAKRGKSVEEILG.

The region spanning 17–80 (LREKMIAVNR…DEARRKMIKV (64 aa)) is the S5 DRBM domain.

The protein belongs to the universal ribosomal protein uS5 family. In terms of assembly, part of the 30S ribosomal subunit. Contacts proteins S4 and S8.

Functionally, with S4 and S12 plays an important role in translational accuracy. In terms of biological role, located at the back of the 30S subunit body where it stabilizes the conformation of the head with respect to the body. The polypeptide is Small ribosomal subunit protein uS5 (Polynucleobacter asymbioticus (strain DSM 18221 / CIP 109841 / QLW-P1DMWA-1) (Polynucleobacter necessarius subsp. asymbioticus)).